The primary structure comprises 104 residues: Protamine-2 (104 aa).

A disordered region spans residues 1-91 (MVRYRMRSPS…RRGCRRSRRR (91 aa)). Ser-8, Ser-10, and Ser-33 each carry phosphoserine. Residues 33 to 44 (SPERVEDYGRTE) show a composition bias toward basic and acidic residues. Basic residues predominate over residues 45–91 (RGHHHRHRRCKRLHRIHKRRRSCRRRRRHSCRHRRRHRRGCRRSRRR).

The protein belongs to the protamine P2 family. In terms of assembly, interacts with TDRP. Post-translationally, proteolytic processing into mature chains is required for histone eviction during spermatogenesis. Transition proteins (TNP1 and TNP2) are required for processing. In terms of tissue distribution, testis.

It localises to the nucleus. It is found in the chromosome. In terms of biological role, protamines substitute for histones in the chromatin of sperm during the haploid phase of spermatogenesis. They compact sperm DNA into a highly condensed, stable and inactive complex. The sequence is that of Protamine-2 (Prm2) from Rattus norvegicus (Rat).